We begin with the raw amino-acid sequence, 169 residues long: Interleukin-2 (169 aa).

The signal sequence occupies residues 1-20; it reads MYSMQLASCVTLTLVLLVNS. O-linked (GalNAc...) threonine glycosylation occurs at Thr23. An intrachain disulfide couples Cys92 to Cys140.

The protein belongs to the IL-2 family. As to expression, produced by immune cells including dendritic cells. In contrast, macrophages do not produce IL2 upon bacterial stimulation.

It localises to the secreted. Cytokine produced by activated CD4-positive helper T-cells and to a lesser extend activated CD8-positive T-cells and natural killer (NK) cells that plays pivotal roles in the immune response and tolerance. Binds to a receptor complex composed of either the high-affinity trimeric IL-2R (IL2RA/CD25, IL2RB/CD122 and IL2RG/CD132) or the low-affinity dimeric IL-2R (IL2RB and IL2RG). Interaction with the receptor leads to oligomerization and conformation changes in the IL-2R subunits resulting in downstream signaling starting with phosphorylation of JAK1 and JAK3. In turn, JAK1 and JAK3 phosphorylate the receptor to form a docking site leading to the phosphorylation of several substrates including STAT5. This process leads to activation of several pathways including STAT, phosphoinositide-3-kinase/PI3K and mitogen-activated protein kinase/MAPK pathways. Functions as a T-cell growth factor and can increase NK-cell cytolytic activity as well. Promotes strong proliferation of activated B-cells and subsequently immunoglobulin production. Plays a pivotal role in regulating the adaptive immune system by controlling the survival and proliferation of regulatory T-cells, which are required for the maintenance of immune tolerance. Moreover, participates in the differentiation and homeostasis of effector T-cell subsets, including Th1, Th2, Th17 as well as memory CD8-positive T-cells. The protein is Interleukin-2 (Il2) of Mus musculus (Mouse).